A 488-amino-acid chain; its full sequence is MSGEKQAEESIVVSGEDEVAGRKVEDSAAEEDIDGNGGNGFSMKSFLWHGGSAWDAWFSCASNQVAQVLLTLPYSFSQLGMLSGILLQIFYGLMGSWTAYLISVLYVEYRARMEKQEAKSFKNHVIQWFEVLDGLLGPYWKAAGLAFNCTFLLFGSVIQLIACASNIYYINDRLDKRTWTYIFGACCATTVFIPSFHNYRIWSFLGLGMTTYTAWYLTIASFLHGQAEGVTHSGPTKLVLYFTGATNILYTFGGHAVTVEIMHAMWKPRKFKSIYLMATLYVFTLTLPSASAVYWAFGDQLLNHSNAFSLLPKTRFRDTAVILMLIHQFITFGFACTPLYFVWEKAIGMHHTKSLCLRALVRLPVVVPIWFLAIIFPFFGPINSAVGALLVTFTVYIIPALAHMLTYRTASARRNAAEKPPFFIPSWAGVYVINAFIVVWVLVLGFGFGGWASMTNFIRQIDTFGLFAKCYQCKPPPAPIAAGAHHRR.

Residues 1-36 (MSGEKQAEESIVVSGEDEVAGRKVEDSAAEEDIDGN) are disordered. The Cytoplasmic segment spans residues 1-64 (MSGEKQAEES…DAWFSCASNQ (64 aa)). A helical membrane pass occupies residues 65–82 (VAQVLLTLPYSFSQLGML). At 83 to 84 (SG) the chain is on the extracellular side. A helical transmembrane segment spans residues 85–105 (ILLQIFYGLMGSWTAYLISVL). Over 106–141 (YVEYRARMEKQEAKSFKNHVIQWFEVLDGLLGPYWK) the chain is Cytoplasmic. Residues 142–162 (AAGLAFNCTFLLFGSVIQLIA) traverse the membrane as a helical segment. Residues 163 to 178 (CASNIYYINDRLDKRT) lie on the Extracellular side of the membrane. The chain crosses the membrane as a helical span at residues 179 to 199 (WTYIFGACCATTVFIPSFHNY). Over 200–202 (RIW) the chain is Cytoplasmic. A helical transmembrane segment spans residues 203-223 (SFLGLGMTTYTAWYLTIASFL). Residues 224-238 (HGQAEGVTHSGPTKL) are Extracellular-facing. A helical membrane pass occupies residues 239–259 (VLYFTGATNILYTFGGHAVTV). The Cytoplasmic portion of the chain corresponds to 260–273 (EIMHAMWKPRKFKS). A helical transmembrane segment spans residues 274–294 (IYLMATLYVFTLTLPSASAVY). Topologically, residues 295-320 (WAFGDQLLNHSNAFSLLPKTRFRDTA) are extracellular. The N-linked (GlcNAc...) asparagine glycan is linked to Asn303. Residues 321-341 (VILMLIHQFITFGFACTPLYF) form a helical membrane-spanning segment. Topologically, residues 342–362 (VWEKAIGMHHTKSLCLRALVR) are cytoplasmic. The helical transmembrane segment at 363 to 383 (LPVVVPIWFLAIIFPFFGPIN) threads the bilayer. Residue Ser384 is a topological domain, extracellular. The helical transmembrane segment at 385–405 (AVGALLVTFTVYIIPALAHML) threads the bilayer. Residues 406 to 427 (TYRTASARRNAAEKPPFFIPSW) lie on the Cytoplasmic side of the membrane. Residues 428-448 (AGVYVINAFIVVWVLVLGFGF) form a helical membrane-spanning segment. The Extracellular portion of the chain corresponds to 449-488 (GGWASMTNFIRQIDTFGLFAKCYQCKPPPAPIAAGAHHRR).

It belongs to the amino acid/polyamine transporter 2 family. Amino acid/auxin permease (AAAP) (TC 2.A.18.1) subfamily.

The protein resides in the cell membrane. In terms of biological role, carrier protein involved in proton-driven auxin influx. Mediates the formation of auxin gradient from developing leaves (site of auxin biosynthesis) to tips by contributing to the loading of auxin in vascular tissues and facilitating acropetal (base to tip) auxin transport within inner tissues of the root apex, and basipetal (tip to base) auxin transport within outer tissues of the root apex. This is Auxin transporter-like protein 1 (LAX1) from Arabidopsis thaliana (Mouse-ear cress).